Consider the following 480-residue polypeptide: UDP-glucose 6-dehydrogenase 4 (480 aa).

Residues 8-13, aspartate 33, arginine 38, 86-90, 127-128, and glutamate 161 each bind NAD(+); these read GAGYVG, VNTPT, and ST. Substrate contacts are provided by residues 157–161, 216–223, and 256–269; these read EFLAE, KLAANAFL, and RIGPKFLNASVGFG. The active-site Nucleophile is cysteine 272. 272–275 contributes to the NAD(+) binding site; that stretch reads CFQK. 334-335 serves as a coordination point for substrate; sequence FK. NAD(+) is bound at residue arginine 342. Serine 393 is subject to Phosphoserine. Arginine 447 is a substrate binding site.

This sequence belongs to the UDP-glucose/GDP-mannose dehydrogenase family.

It catalyses the reaction UDP-alpha-D-glucose + 2 NAD(+) + H2O = UDP-alpha-D-glucuronate + 2 NADH + 3 H(+). The protein operates within nucleotide-sugar biosynthesis; UDP-alpha-D-glucuronate biosynthesis; UDP-alpha-D-glucuronate from UDP-alpha-D-glucose: step 1/1. Functionally, involved in the biosynthesis of UDP-glucuronic acid (UDP-GlcA), providing nucleotide sugars for cell-wall polymers. This is UDP-glucose 6-dehydrogenase 4 (UGD4) from Oryza sativa subsp. japonica (Rice).